We begin with the raw amino-acid sequence, 1412 residues long: DNA-directed RNA polymerase subunit beta' (1412 aa).

Cys-71, Cys-73, Cys-86, and Cys-89 together coordinate Zn(2+). Asp-461, Asp-463, and Asp-465 together coordinate Mg(2+). Zn(2+) contacts are provided by Cys-815, Cys-889, Cys-896, and Cys-899.

Belongs to the RNA polymerase beta' chain family. The RNAP catalytic core consists of 2 alpha, 1 beta, 1 beta' and 1 omega subunit. When a sigma factor is associated with the core the holoenzyme is formed, which can initiate transcription. Requires Mg(2+) as cofactor. Zn(2+) is required as a cofactor.

It catalyses the reaction RNA(n) + a ribonucleoside 5'-triphosphate = RNA(n+1) + diphosphate. DNA-dependent RNA polymerase catalyzes the transcription of DNA into RNA using the four ribonucleoside triphosphates as substrates. This is DNA-directed RNA polymerase subunit beta' from Actinobacillus pleuropneumoniae serotype 5b (strain L20).